A 905-amino-acid polypeptide reads, in one-letter code: MSGDYKPNYQSSPSRKRLPLQSKDQASIYKYQTPSTLNLYNNTVNNNSSNNSNNHLLHNSNPNSSYLYDSSKQYSNQINIRNNSNSNSNTNNITSKKASSSYSINNKVDHNSHNNNDDDDIEDDVDINYSTNNASSNILHNRFSNSNKDDSYIDYSTDENPKILKQPQPLYNHLNNQIQQQQQQQQQQQQQQQQQQQQQQQQQQQQQQQQQQQRNNNNNSNSSNNNNTSTTIKRNNQQIDNNSNKNIISKFIGDPWKNFYYGSNKSLWPFERNNNSNNSSNNNNKVNFKQAIWIFIFSVLFIGCLLGLFSTNFYGIHIYFPSFSTTKTNSPFNSTNNNIQFSNLITKEQLYPIIDEYFKKNEILKSYNKLFEKIENDIKYLSEREQYKDIINEIKEELKLVKLSNMDEDRVNQLISKMINHYNNNENNKQELKELLSKSIEELTKLKSDSKEQLIQISTESMNQLGQLKSESINQLGQVKSESIDKFQSTLKSLSKEEQSKIEREFNHQFNQLNKDADQLLSQHSLKIEKLREEINENQQSSLLKLTQEYKQLEERLKEFSSKLQQSISSSSMDQFESWKLVFIKDIEERINKESSKLTNQYIQLTQQFTKIQSFIKDNPSIDSLTNTIESLEGIKLLIEDILEVYSADKIAKVDYALGLAGASIEYNALHYRVSETYPPIKGSGSGSGSGGANGNSLGLYYYNLATNWIFPQPKPNPPETILDPMVNTGSCWGFYTGNGTIVIRLAKKIAITEVTMEHISSNISHHIDSAPKEFQVFGLINSSDIGQSLGVFTYDTTINRHLQTFKVNKIQSTTTTTTNQDQNDDDNIQEFSHVALRILSNHGYRYTCIYRFRVHGYQIPHPEQEQIQIIQEEQSFKQEEINQQQIEQIEQIEQIEKQQQSDEL.

Disordered regions lie at residues 1 to 21, 41 to 166, and 207 to 242; these read MSGD…LPLQ, NNTV…ILKQ, and QQQQ…IDNN. Over 1–290 the chain is Nuclear; that stretch reads MSGDYKPNYQ…NNNNKVNFKQ (290 aa). Composition is skewed to low complexity over residues 41–67 and 75–101; these read NNTV…SSYL and SNQI…ASSS. The span at 107 to 116 shows a compositional bias: basic and acidic residues; the sequence is KVDHNSHNNN. Positions 117-126 are enriched in acidic residues; the sequence is DDDDIEDDVD. Residues 129–146 are compositionally biased toward polar residues; sequence YSTNNASSNILHNRFSNS. Positions 170-221 form a coiled coil; it reads LYNHLNNQIQQQQQQQQQQQQQQQQQQQQQQQQQQQQQQQQQQQRNNNNNSN. Residues 207–227 show a composition bias toward low complexity; that stretch reads QQQQQQQRNNNNNSNSSNNNN. The chain crosses the membrane as a helical span at residues 291-311; sequence AIWIFIFSVLFIGCLLGLFST. Over 312–905 the chain is Perinuclear space; the sequence is NFYGIHIYFP…IEKQQQSDEL (594 aa). Coiled coils occupy residues 359–456 and 504–609; these read KKNE…QLIQ and REFN…TQQF. The SUN domain maps to 662 to 860; it reads GASIEYNALH…YRFRVHGYQI (199 aa). A coiled-coil region spans residues 864–901; that stretch reads EQEQIQIIQEEQSFKQEEINQQQIEQIEQIEQIEKQQQ.

In terms of assembly, homodimer and homooligomer.

It is found in the nucleus membrane. May have an important role in defining the spacing of the nuclear envelope lumen. Essential for centrosome attachment to the nucleus, maintenance of correct ploidy, proper mitosis, association of the centromere cluster with the centrosome and the maintenance of genome stability. Requires direct chromatin binding for inner nuclear membrane targeting. In Dictyostelium discoideum (Social amoeba), this protein is Sun domain-containing protein 1 (sun1).